The primary structure comprises 147 residues: C-glycoside deglycosidase beta subunit (147 aa).

It belongs to the C-glycoside deglycosidase beta subunit family. Heterooctamer composed of four alpha subunits (DfgA) and four beta subunits (DfgB). The cofactor is Mn(2+).

It catalyses the reaction 3''-dehydroisoorientin = 1,5-anhydro-D-erythro-hex-1-en-3-ulose + luteolin. The enzyme catalyses 3''-dehydroisovitexin = 1,5-anhydro-D-erythro-hex-1-en-3-ulose + apigenin. Activity is strongly reduced in the presence of chelating agents. Carbon-carbon bond-cleaving enzyme which participates in the metabolism of C-glycosides. Acts on the C6-glycosylated compounds 3''-dehydroisoorientin (3''-oxo-homoorientin) and 3''-dehydroisovitexin (3''-oxo-isovitexin). In Eubacterium cellulosolvens (strain ATCC 43171 / JCM 9499 / 6) (Cillobacterium cellulosolvens), this protein is C-glycoside deglycosidase beta subunit.